We begin with the raw amino-acid sequence, 716 residues long: Translation initiation factor IF-2 (716 aa).

The segment at 52–135 (QQESNNNTKQ…PAAEPKEMPS (84 aa)) is disordered. Residues 56 to 125 (NNNTKQNTQN…KNNKGNKNNK (70 aa)) show a composition bias toward low complexity. The tr-type G domain occupies 218-387 (ERPAVVTIMG…GLVAEVQELK (170 aa)). A G1 region spans residues 227-234 (GHVDHGKT). 227-234 (GHVDHGKT) provides a ligand contact to GTP. The tract at residues 252–256 (GITQH) is G2. Positions 273–276 (DTPG) are G3. GTP is bound by residues 273-277 (DTPGH) and 327-330 (NKID). The interval 327–330 (NKID) is G4. The G5 stretch occupies residues 363–365 (SAL).

Belongs to the TRAFAC class translation factor GTPase superfamily. Classic translation factor GTPase family. IF-2 subfamily.

The protein localises to the cytoplasm. One of the essential components for the initiation of protein synthesis. Protects formylmethionyl-tRNA from spontaneous hydrolysis and promotes its binding to the 30S ribosomal subunits. Also involved in the hydrolysis of GTP during the formation of the 70S ribosomal complex. The sequence is that of Translation initiation factor IF-2 from Staphylococcus haemolyticus (strain JCSC1435).